The primary structure comprises 496 residues: Rhamnulokinase (496 aa).

Position 13 to 17 (13 to 17 (ASSGR)) interacts with ATP. Substrate-binding positions include glycine 83 and 236 to 238 (HDT). Aspartate 237 (proton acceptor) is an active-site residue. Threonine 259 contacts ATP. Asparagine 296 lines the substrate pocket. Glutamine 304 contributes to the ATP binding site. An intrachain disulfide couples cysteine 353 to cysteine 370. Residue glycine 402 coordinates ATP. The cysteines at positions 413 and 417 are disulfide-linked.

This sequence belongs to the rhamnulokinase family. Mg(2+) serves as cofactor.

It carries out the reaction L-rhamnulose + ATP = L-rhamnulose 1-phosphate + ADP + H(+). It participates in carbohydrate degradation; L-rhamnose degradation; glycerone phosphate from L-rhamnose: step 2/3. Its function is as follows. Involved in the catabolism of L-rhamnose (6-deoxy-L-mannose). Catalyzes the transfer of the gamma-phosphate group from ATP to the 1-hydroxyl group of L-rhamnulose to yield L-rhamnulose 1-phosphate. In Pectobacterium carotovorum subsp. carotovorum (strain PC1), this protein is Rhamnulokinase.